A 147-amino-acid polypeptide reads, in one-letter code: Ubiquitin-conjugating enzyme E2 D2B (147 aa).

Residues methionine 1 to methionine 147 enclose the UBC core domain. The active-site Glycyl thioester intermediate is the cysteine 85.

This sequence belongs to the ubiquitin-conjugating enzyme family. In terms of assembly, interacts with CNOT4 (via RING domain). Testis-specific. Mainly expressed in the round spermatids (at protein level).

The enzyme catalyses S-ubiquitinyl-[E1 ubiquitin-activating enzyme]-L-cysteine + [E2 ubiquitin-conjugating enzyme]-L-cysteine = [E1 ubiquitin-activating enzyme]-L-cysteine + S-ubiquitinyl-[E2 ubiquitin-conjugating enzyme]-L-cysteine.. It participates in protein modification; protein ubiquitination. In terms of biological role, catalyzes the covalent attachment of ubiquitin to other proteins. Mediates the selective degradation of short-lived and abnormal proteins. Functions in the E6/E6-AP-induced ubiquitination of p53/TP53. Mediates ubiquitination of PEX5 and SQSTM1 and autoubiquitination of STUB1 and TRAF6. Involved in the signal-induced conjugation and subsequent degradation of NFKBIA, FBXW2-mediated GCM1 ubiquitination and degradation, MDM2-dependent degradation of p53/TP53 and the activation of MAVS in the mitochondria by RIGI in response to viral infection Plays a role in early maturation of the testis. This Rattus norvegicus (Rat) protein is Ubiquitin-conjugating enzyme E2 D2B (Ube2d2b).